We begin with the raw amino-acid sequence, 426 residues long: Phosphomethylpyrimidine synthase (426 aa).

Substrate contacts are provided by residues asparagine 65, methionine 94, tyrosine 123, histidine 162, 184-186 (SRG), 225-228 (DGLR), and glutamate 264. Histidine 268 is a Zn(2+) binding site. Tyrosine 291 provides a ligand contact to substrate. Histidine 332 serves as a coordination point for Zn(2+). Residues cysteine 409, cysteine 412, and cysteine 416 each contribute to the [4Fe-4S] cluster site.

It belongs to the ThiC family. The cofactor is [4Fe-4S] cluster.

It catalyses the reaction 5-amino-1-(5-phospho-beta-D-ribosyl)imidazole + S-adenosyl-L-methionine = 4-amino-2-methyl-5-(phosphooxymethyl)pyrimidine + CO + 5'-deoxyadenosine + formate + L-methionine + 3 H(+). Its pathway is cofactor biosynthesis; thiamine diphosphate biosynthesis. Functionally, catalyzes the synthesis of the hydroxymethylpyrimidine phosphate (HMP-P) moiety of thiamine from aminoimidazole ribotide (AIR) in a radical S-adenosyl-L-methionine (SAM)-dependent reaction. The protein is Phosphomethylpyrimidine synthase of Thermodesulfovibrio yellowstonii (strain ATCC 51303 / DSM 11347 / YP87).